The sequence spans 450 residues: Phosphoglucosamine mutase (450 aa).

S101 (phosphoserine intermediate) is an active-site residue. Mg(2+) contacts are provided by S101, D241, D243, and D245. The residue at position 101 (S101) is a Phosphoserine.

This sequence belongs to the phosphohexose mutase family. Mg(2+) is required as a cofactor. Activated by phosphorylation.

It carries out the reaction alpha-D-glucosamine 1-phosphate = D-glucosamine 6-phosphate. Functionally, catalyzes the conversion of glucosamine-6-phosphate to glucosamine-1-phosphate. The polypeptide is Phosphoglucosamine mutase (Lysinibacillus sphaericus (strain C3-41)).